A 423-amino-acid polypeptide reads, in one-letter code: Polyglutamylase complex subunit TTLL1 (423 aa).

The 367-residue stretch at 1-367 (MAGRVKWVTD…NGEIPDCKWN (367 aa)) folds into the TTL domain. ATP is bound by residues K138, 144–145 (QG), 181–184 (SVYI), and 194–196 (KFD). Position 144 (Q144) interacts with a protein. R220 provides a ligand contact to L-glutamate. ATP is bound at residue 241-242 (TN). Residue K259 participates in L-glutamate binding. Mg(2+) is bound by residues D313, E326, and N328. An L-glutamate-binding site is contributed by K344. A disordered region spans residues 390-423 (DGAERELRNRPGQPVGPRAGRSRDSGRSVLTTWK).

This sequence belongs to the tubulin polyglutamylase family. Part of the neuronal tubulin polyglutamylase complex which contains TPGS1, TPGS2, TTLL1, LRRC49 and NICN1. Interacts with PCM1, CSTPP1 and LRRC49. The cofactor is Mg(2+). In terms of tissue distribution, highly expressed in brain, heart and kidney. Expressed in liver, lung, muscle, spleen, testis and trachea. In the brain, expressed in ependymal cilia, cortex, corpus callosum and striatum. Expressed in blastomere.

It is found in the cytoplasm. The protein resides in the cytoskeleton. The protein localises to the cilium basal body. It localises to the cilium axoneme. Its subcellular location is the cell projection. It is found in the cilium. The protein resides in the flagellum. The catalysed reaction is (L-glutamyl)(n)-gamma-L-glutamyl-L-glutamyl-[protein] + L-glutamate + ATP = (L-glutamyl)(n+1)-gamma-L-glutamyl-L-glutamyl-[protein] + ADP + phosphate + H(+). Catalytic subunit of a polyglutamylase complex which modifies tubulin, generating side chains of glutamate on the gamma-carboxyl group of specific glutamate residues within the C-terminal tail of tubulin. Probably involved in the side-chain elongation step of the polyglutamylation reaction rather than the initiation step. Modifies both alpha- and beta-tubulins with a preference for the alpha-tail. Unlike most polyglutamylases of the tubulin--tyrosine ligase family, only displays a catalytic activity when in complex with other proteins as it is most likely lacking domains important for autonomous activity. Part of the neuronal tubulin polyglutamylase complex. Mediates cilia and flagella polyglutamylation which is essential for their biogenesis and motility. Involved in respiratory motile cilia function through the regulation of beating asymmetry. Essential for sperm flagella biogenesis, motility and male fertility. Also mediates glutamylation of non-tubulin proteins. Involved in KLF4 glutamylation which impedes its ubiquitination, thereby leading to somatic cell reprogramming, pluripotency maintenance and embryogenesis. This Mus musculus (Mouse) protein is Polyglutamylase complex subunit TTLL1.